The chain runs to 253 residues: Probable transcriptional regulatory protein RBE_0568 (253 aa).

The segment at 1–21 (MAGHSKFKNIQHRKGAQDKKR) is disordered.

The protein belongs to the TACO1 family.

Its subcellular location is the cytoplasm. This Rickettsia bellii (strain RML369-C) protein is Probable transcriptional regulatory protein RBE_0568.